Here is a 450-residue protein sequence, read N- to C-terminus: Sorting nexin-4 (450 aa).

Met1 bears the N-acetylmethionine mark. A disordered region spans residues 1–46 (MEQAPPDPERQLQPAPLEPLGSPDAVLGAAVGKETEGAGEESSGVD). Phosphoserine is present on Ser22. Residues 61-187 (SVSEAEKRTG…YLFLTQEGNW (127 aa)) form the PX domain. Positions 106, 108, 132, and 154 each coordinate a 1,2-diacyl-sn-glycero-3-phospho-(1D-myo-inositol-3-phosphate).

It belongs to the sorting nexin family. In terms of assembly, heterodimer; heterodimerizes with SNX7 or SNX30. Interacts with WWC1/KIBRA. Identified in a complex with WWC1/KIBRA and dynein components DYNLL1 and DYNC1I2. Interacts with BIN1.

It localises to the early endosome. It is found in the early endosome membrane. Functionally, involved in the regulation of endocytosis and in several stages of intracellular trafficking. Plays a role in recycling endocytosed transferrin receptor and prevent its degradation. Involved in autophagosome assembly by regulating trafficking and recycling of phospholipid scramblase ATG9A. This Pongo abelii (Sumatran orangutan) protein is Sorting nexin-4.